We begin with the raw amino-acid sequence, 550 residues long: Flagellin (550 aa).

It belongs to the bacterial flagellin family.

It localises to the secreted. Its subcellular location is the bacterial flagellum. Flagellin is the subunit protein which polymerizes to form the filaments of bacterial flagella. This is Flagellin (fliC) from Shigella flexneri.